A 502-amino-acid polypeptide reads, in one-letter code: MKLIETIKKYAQTQPDTLAFVNEEEKLTYGELWSQSERLAARIQSEALTDASPIIVYGHMKPVMAVSFLACVKAGHPYIPVDVSIPADRILKIINSSKAELLLNNSGTSVDTGDALISVVEPGVLEGDGVPETDPGRWVHGEDTFYIIYTSGSTGNPKGVQISADNLQSFTDWITNDFPVESGQVFLNQAPFSFDLSVMDLYPCLQSGGTLWTVTKDMINRPKLLFEALKQSNVNVWTSTPSFAQMCLMDPSYSEELLPELSLFMFCGETLPASVARQLKERFPKARVFNTYGPTEATVAVTSIEVTDDVLNKYSSLPVGSEKPETEIVIINEDGKAVQDGEKGEIIITGASVSKGYLGEKALTEKAFFSYNGSPAYRTGDAGYKENGQLFFLGRLDFQIKLHGYRIELEEIEYQINQSRYVQSAVVIPFYREEKIEYLIAMIVPAEHDFEKEYQLTSAIKKDLGSKLPAYMIPRKFMYQKEIPMTANGKIDRKRLKEEVTV.

Position 150-151 (150-151 (TS)) interacts with ATP. Residue Asp-195 participates in D-alanine binding. 290-295 (NTYGPT) contacts ATP. Val-299 contacts D-alanine. Positions 381 and 490 each coordinate ATP. Residue Lys-490 participates in D-alanine binding.

It belongs to the ATP-dependent AMP-binding enzyme family. DltA subfamily.

Its subcellular location is the cytoplasm. It carries out the reaction holo-[D-alanyl-carrier protein] + D-alanine + ATP = D-alanyl-[D-alanyl-carrier protein] + AMP + diphosphate. The protein operates within cell wall biogenesis; lipoteichoic acid biosynthesis. In terms of biological role, catalyzes the first step in the D-alanylation of lipoteichoic acid (LTA), the activation of D-alanine and its transfer onto the D-alanyl carrier protein (Dcp) DltC. In an ATP-dependent two-step reaction, forms a high energy D-alanyl-AMP intermediate, followed by transfer of the D-alanyl residue as a thiol ester to the phosphopantheinyl prosthetic group of the Dcp. D-alanylation of LTA plays an important role in modulating the properties of the cell wall in Gram-positive bacteria, influencing the net charge of the cell wall. This Bacillus licheniformis (strain ATCC 14580 / DSM 13 / JCM 2505 / CCUG 7422 / NBRC 12200 / NCIMB 9375 / NCTC 10341 / NRRL NRS-1264 / Gibson 46) protein is D-alanine--D-alanyl carrier protein ligase.